We begin with the raw amino-acid sequence, 204 residues long: uncharacterized protein (204 aa).

A disordered region spans residues 1–20 (MQNPLPEVMSPEHDKRTTTP).

This is an uncharacterized protein from Frog virus 3 (isolate Goorha) (FV-3).